We begin with the raw amino-acid sequence, 253 residues long: Triosephosphate isomerase (253 aa).

Residue 9-11 (NWK) participates in substrate binding. The active-site Electrophile is His-95. Glu-167 functions as the Proton acceptor in the catalytic mechanism. Substrate contacts are provided by residues Gly-173, Ser-213, and 234–235 (GG). Ser-213 is subject to Phosphoserine.

It belongs to the triosephosphate isomerase family. As to quaternary structure, homodimer.

It localises to the cytoplasm. It catalyses the reaction D-glyceraldehyde 3-phosphate = dihydroxyacetone phosphate. It participates in carbohydrate biosynthesis; gluconeogenesis. It functions in the pathway carbohydrate degradation; glycolysis; D-glyceraldehyde 3-phosphate from glycerone phosphate: step 1/1. Functionally, involved in the gluconeogenesis. Catalyzes stereospecifically the conversion of dihydroxyacetone phosphate (DHAP) to D-glyceraldehyde-3-phosphate (G3P). The sequence is that of Triosephosphate isomerase from Geobacillus thermodenitrificans (strain NG80-2).